A 225-amino-acid chain; its full sequence is Uridylate kinase (225 aa).

Residue 9-10 participates in ATP binding; sequence GS. G46 contributes to the UMP binding site. Residues G47 and R51 each coordinate ATP. UMP-binding positions include D67 and 115–121; that span reads THPAHTT. Residues T141, N142, Y147, and D150 each contribute to the ATP site.

It belongs to the UMP kinase family. Homohexamer.

It is found in the cytoplasm. It carries out the reaction UMP + ATP = UDP + ADP. Its pathway is pyrimidine metabolism; CTP biosynthesis via de novo pathway; UDP from UMP (UMPK route): step 1/1. Its activity is regulated as follows. Inhibited by UTP. Functionally, catalyzes the reversible phosphorylation of UMP to UDP. The sequence is that of Uridylate kinase from Methanococcus maripaludis (strain C7 / ATCC BAA-1331).